Reading from the N-terminus, the 156-residue chain is Small ribosomal subunit protein uS7 (156 aa).

The protein belongs to the universal ribosomal protein uS7 family. Part of the 30S ribosomal subunit. Contacts proteins S9 and S11.

In terms of biological role, one of the primary rRNA binding proteins, it binds directly to 16S rRNA where it nucleates assembly of the head domain of the 30S subunit. Is located at the subunit interface close to the decoding center, probably blocks exit of the E-site tRNA. The polypeptide is Small ribosomal subunit protein uS7 (Rhodospirillum rubrum (strain ATCC 11170 / ATH 1.1.1 / DSM 467 / LMG 4362 / NCIMB 8255 / S1)).